The primary structure comprises 183 residues: ATP synthase subunit delta (183 aa).

The protein belongs to the ATPase delta chain family. As to quaternary structure, F-type ATPases have 2 components, F(1) - the catalytic core - and F(0) - the membrane proton channel. F(1) has five subunits: alpha(3), beta(3), gamma(1), delta(1), epsilon(1). F(0) has three main subunits: a(1), b(2) and c(10-14). The alpha and beta chains form an alternating ring which encloses part of the gamma chain. F(1) is attached to F(0) by a central stalk formed by the gamma and epsilon chains, while a peripheral stalk is formed by the delta and b chains.

It localises to the cell inner membrane. In terms of biological role, f(1)F(0) ATP synthase produces ATP from ADP in the presence of a proton or sodium gradient. F-type ATPases consist of two structural domains, F(1) containing the extramembraneous catalytic core and F(0) containing the membrane proton channel, linked together by a central stalk and a peripheral stalk. During catalysis, ATP synthesis in the catalytic domain of F(1) is coupled via a rotary mechanism of the central stalk subunits to proton translocation. Functionally, this protein is part of the stalk that links CF(0) to CF(1). It either transmits conformational changes from CF(0) to CF(1) or is implicated in proton conduction. This is ATP synthase subunit delta from Thermotoga maritima (strain ATCC 43589 / DSM 3109 / JCM 10099 / NBRC 100826 / MSB8).